The primary structure comprises 630 residues: 1-deoxy-D-xylulose-5-phosphate synthase (630 aa).

Thiamine diphosphate is bound by residues histidine 72 and 113–115; that span reads GHS. Aspartate 144 lines the Mg(2+) pocket. Residues 145–146, asparagine 173, tyrosine 284, and glutamate 367 contribute to the thiamine diphosphate site; that span reads GA. Residue asparagine 173 coordinates Mg(2+).

The protein belongs to the transketolase family. DXPS subfamily. As to quaternary structure, homodimer. It depends on Mg(2+) as a cofactor. Thiamine diphosphate is required as a cofactor.

It catalyses the reaction D-glyceraldehyde 3-phosphate + pyruvate + H(+) = 1-deoxy-D-xylulose 5-phosphate + CO2. Its pathway is metabolic intermediate biosynthesis; 1-deoxy-D-xylulose 5-phosphate biosynthesis; 1-deoxy-D-xylulose 5-phosphate from D-glyceraldehyde 3-phosphate and pyruvate: step 1/1. In terms of biological role, catalyzes the acyloin condensation reaction between C atoms 2 and 3 of pyruvate and glyceraldehyde 3-phosphate to yield 1-deoxy-D-xylulose-5-phosphate (DXP). The protein is 1-deoxy-D-xylulose-5-phosphate synthase of Bacillus mycoides (strain KBAB4) (Bacillus weihenstephanensis).